A 132-amino-acid polypeptide reads, in one-letter code: Agouti-signaling protein (132 aa).

An N-terminal signal peptide occupies residues M1 to S22. N39 carries an N-linked (GlcNAc...) asparagine glycan. The interval I62–P85 is disordered. Positions S63–S78 are enriched in basic and acidic residues. 5 disulfide bridges follow: C93–C108, C100–C114, C107–C125, C111–C132, and C116–C123. Positions C93–C132 constitute an Agouti domain.

Its subcellular location is the secreted. In terms of biological role, involved in the regulation of melanogenesis. The binding of ASP to MC1R precludes alpha-MSH initiated signaling and thus blocks production of cAMP, leading to a down-regulation of eumelanogenesis (brown/black pigment) and thus increasing synthesis of pheomelanin (yellow/red pigment). The polypeptide is Agouti-signaling protein (ASIP) (Pongo pygmaeus (Bornean orangutan)).